The chain runs to 88 residues: FXYD domain-containing ion transport regulator 3 (88 aa).

The first 20 residues, 1 to 20, serve as a signal peptide directing secretion; the sequence is MQEFALSLLVLLAGLPTLDA. At 21–38 the chain is on the extracellular side; sequence NDPEDKDSPFYYDWHSLR. A helical transmembrane segment spans residues 39-59; the sequence is VGGLICAGILCALGIIVLMSG. Over 60 to 88 the chain is Cytoplasmic; sequence KCKCKFSQKPSHRPGDGPPLITPGSAHNC. The segment at 66-88 is disordered; it reads SQKPSHRPGDGPPLITPGSAHNC.

This sequence belongs to the FXYD family. In terms of assembly, regulatory subunit of the sodium/potassium-transporting ATPase which is composed of a catalytic alpha subunit, a non-catalytic beta subunit and an additional regulatory subunit. Interacts with catalytic alpha subunit ATP1A1. Also interacts with non-catalytic beta subunit ATP1B1. Interacts with the alpha1-beta1, alpha2-beta1 and alpha3-beta1 NKA isozymes. Glutathionylated.

Its subcellular location is the cell membrane. In terms of biological role, associates with and regulates the activity of the sodium/potassium-transporting ATPase (NKA) which transports Na(+) out of the cell and K(+) into the cell. Reduces glutathionylation of the NKA beta-1 subunit ATP1B1, thus reversing glutathionylation-mediated inhibition of ATP1B1. Induces a hyperpolarization-activated chloride current when expressed in Xenopus oocytes. In Rattus norvegicus (Rat), this protein is FXYD domain-containing ion transport regulator 3 (Fxyd3).